The sequence spans 336 residues: Phosphate acyltransferase (336 aa).

This sequence belongs to the PlsX family. In terms of assembly, homodimer. Probably interacts with PlsY.

It is found in the cytoplasm. It carries out the reaction a fatty acyl-[ACP] + phosphate = an acyl phosphate + holo-[ACP]. The protein operates within lipid metabolism; phospholipid metabolism. Functionally, catalyzes the reversible formation of acyl-phosphate (acyl-PO(4)) from acyl-[acyl-carrier-protein] (acyl-ACP). This enzyme utilizes acyl-ACP as fatty acyl donor, but not acyl-CoA. In Pseudomonas putida (strain GB-1), this protein is Phosphate acyltransferase.